The chain runs to 269 residues: Ribonuclease HII (269 aa).

Residues 83-269 (YLIAGVDEVG…HRMSFLTNIL (187 aa)) enclose the RNase H type-2 domain. Residues D89, E90, and D185 each contribute to the a divalent metal cation site.

Belongs to the RNase HII family. Requires Mn(2+) as cofactor. It depends on Mg(2+) as a cofactor.

The protein resides in the cytoplasm. The enzyme catalyses Endonucleolytic cleavage to 5'-phosphomonoester.. In terms of biological role, endonuclease that specifically degrades the RNA of RNA-DNA hybrids. The chain is Ribonuclease HII from Clostridium botulinum (strain Langeland / NCTC 10281 / Type F).